Reading from the N-terminus, the 338-residue chain is mRNA decay activator protein ZFP36L1 (338 aa).

Residues 1 to 111 (MTTTLVSATI…QKQPGSGQVN (111 aa)) are necessary and sufficient for the association with mRNA decay enzymes and mRNA decay activation. The residue at position 54 (S54) is a Phosphoserine; by MAPKAPK2. Phosphoserine; by PKB/AKT1 is present on S90. At S92 the chain carries Phosphoserine; by PKB/AKT1 and MAPKAPK2. The segment at 93-113 (EGGERLLPTQKQPGSGQVNSS) is disordered. Residues 101-113 (TQKQPGSGQVNSS) are compositionally biased toward polar residues. 2 consecutive C3H1-type zinc fingers follow at residues 114 to 142 (RYKT…HGIH) and 152 to 180 (KYKT…HNAE). The necessary for mRNA decay activation stretch occupies residues 185–338 (LAGGRDLSAD…IFSRLSISDD (154 aa)). S203 carries the phosphoserine; by PKB/AKT1 and MAPKAPK2 modification. The segment at 273–338 (SPTTFLFRPM…IFSRLSISDD (66 aa)) is disordered. Residues 305-318 (YLSSSSSSHSGSDS) show a composition bias toward low complexity. Phosphoserine is present on S318. Position 334 is a phosphoserine; by RPS6KA1 (S334).

In terms of assembly, associates with the cytoplasmic CCR4-NOT deadenylase and RNA exosome complexes to trigger ARE-containing mRNA deadenylation and decay processes. Interacts with CNOT1. Interacts (via N-terminus) with CNOT6. Interacts with CNOT7; this interaction is inhibited in response to phorbol 12-myristate 13-acetate (PMA) treatment in a p38 MAPK-dependent manner. Interacts with DCP1A. Interacts (via N-terminus) with DCP2. Interacts (via N-terminus) with EXOSC2. Interacts with XRN1. Interacts (via phosphorylated form) with YWHAB; this interaction occurs in a protein kinase AKT1-dependent manner. Interacts (via phosphorylated form) with YWHAZ; this interaction occurs in a p38 MAPK- and AKT-signaling pathways. In terms of processing, phosphorylated. Phosphorylated by RPS6KA1 at Ser-334 upon phorbol 12-myristate 13-acetate (PMA) treatment; this phosphorylation results in dissociation of the CCR4-NOT deadenylase complex and induces p38 MAPK-mediated stabilization of the low-density lipoprotein receptor LDLR mRNA. Phosphorylated by protein kinase AKT1 at Ser-92 and Ser-203 in response to insulin; these phosphorylations stabilize ZFP36L1, increase the association with 14-3-3 proteins and mediate ARE-containing mRNA stabilization. AKT1-mediated phosphorylation at Ser-92 does not impair ARE-containing RNA-binding. Phosphorylated at Ser-54, Ser-92 and Ser-203 by MAPKAPK2; these phosphorylations increase the association with 14-3-3 proteins and mediate ARE-containing mRNA stabilization in a protein kinase AKT1-independent manner. MAPKAPK2-mediated phosphorylations at Ser-54, Ser-92 and Ser-203 do not impair ARE-containing RNA-binding. Phosphorylations increase the association with 14-3-3 proteins and mediate ARE-containing mRNA stabilization during early adipogenesis in a p38 MAPK- and AKT-dependent manner. Phosphorylated by protein kinase AKT1 at Ser-92. Post-translationally, ubiquitinated. Ubiquitination leads to proteasomal degradation, a process inhibited by phosphorylations at Ser-90, Ser-92 and Ser-203.

Its subcellular location is the nucleus. The protein localises to the cytoplasm. The protein resides in the cytoplasmic granule. It localises to the P-body. Its function is as follows. Zinc-finger RNA-binding protein that destabilizes several cytoplasmic AU-rich element (ARE)-containing mRNA transcripts by promoting their poly(A) tail removal or deadenylation, and hence provide a mechanism for attenuating protein synthesis. Acts as a 3'-untranslated region (UTR) ARE mRNA-binding adapter protein to communicate signaling events to the mRNA decay machinery. Functions by recruiting the CCR4-NOT deadenylase complex and components of the cytoplasmic RNA decay machinery to the bound ARE-containing mRNAs, and hence promotes ARE-mediated mRNA deadenylation and decay processes. Also induces the degradation of ARE-containing mRNAs even in absence of poly(A) tail. Binds to 3'-UTR ARE of numerous mRNAs. Positively regulates early adipogenesis by promoting ARE-mediated mRNA decay of immediate early genes (IEGs). Promotes ARE-mediated mRNA decay of mineralocorticoid receptor NR3C2 mRNA in response to hypertonic stress. Negatively regulates hematopoietic/erythroid cell differentiation by promoting ARE-mediated mRNA decay of the transcription factor STAT5B mRNA. Positively regulates monocyte/macrophage cell differentiation by promoting ARE-mediated mRNA decay of the cyclin-dependent kinase CDK6 mRNA. Promotes degradation of ARE-containing pluripotency-associated mRNAs in embryonic stem cells (ESCs), such as NANOG, through a fibroblast growth factor (FGF)-induced MAPK-dependent signaling pathway, and hence attenuates ESC self-renewal and positively regulates mesendoderm differentiation. May play a role in mediating pro-apoptotic effects in malignant B-cells by promoting ARE-mediated mRNA decay of BCL2 mRNA. In association with ZFP36L2 maintains quiescence on developing B lymphocytes by promoting ARE-mediated decay of several mRNAs encoding cell cycle regulators that help B cells progress through the cell cycle, and hence ensuring accurate variable-diversity-joining (VDJ) recombination and functional immune cell formation. Together with ZFP36L2 is also necessary for thymocyte development and prevention of T-cell acute lymphoblastic leukemia (T-ALL) transformation by promoting ARE-mediated mRNA decay of the oncogenic transcription factor NOTCH1 mRNA. Participates in the delivery of target ARE-mRNAs to processing bodies (PBs). In addition to its cytosolic mRNA-decay function, plays a role in the regulation of nuclear mRNA 3'-end processing; modulates mRNA 3'-end maturation efficiency of the DLL4 mRNA through binding with an ARE embedded in a weak noncanonical polyadenylation (poly(A)) signal in endothelial cells. Also involved in the regulation of stress granule (SG) and P-body (PB) formation and fusion. Plays a role in vasculogenesis and endocardial development. Plays a role in the regulation of keratinocyte proliferation, differentiation and apoptosis. Plays a role in myoblast cell differentiation. This is mRNA decay activator protein ZFP36L1 from Rattus norvegicus (Rat).